Here is a 220-residue protein sequence, read N- to C-terminus: Ribosomal RNA large subunit methyltransferase E (220 aa).

A compositionally biased stretch (basic and acidic residues) spans 1–10 (MSRSGKDPGK). The disordered stretch occupies residues 1–24 (MSRSGKDPGKRVKTARKRSASSTR). Gly-75, Trp-77, Asp-94, Asp-110, and Asp-134 together coordinate S-adenosyl-L-methionine. The active-site Proton acceptor is Lys-174.

This sequence belongs to the class I-like SAM-binding methyltransferase superfamily. RNA methyltransferase RlmE family.

It localises to the cytoplasm. It carries out the reaction uridine(2552) in 23S rRNA + S-adenosyl-L-methionine = 2'-O-methyluridine(2552) in 23S rRNA + S-adenosyl-L-homocysteine + H(+). Functionally, specifically methylates the uridine in position 2552 of 23S rRNA at the 2'-O position of the ribose in the fully assembled 50S ribosomal subunit. This chain is Ribosomal RNA large subunit methyltransferase E, found in Erythrobacter litoralis (strain HTCC2594).